The primary structure comprises 207 residues: Large ribosomal subunit protein uL4 (207 aa).

Positions 49 to 78 (HAVKNRSAVSGGGRKPWRQKGTGRARQGSI) are disordered.

This sequence belongs to the universal ribosomal protein uL4 family. In terms of assembly, part of the 50S ribosomal subunit.

Functionally, one of the primary rRNA binding proteins, this protein initially binds near the 5'-end of the 23S rRNA. It is important during the early stages of 50S assembly. It makes multiple contacts with different domains of the 23S rRNA in the assembled 50S subunit and ribosome. Forms part of the polypeptide exit tunnel. The chain is Large ribosomal subunit protein uL4 from Streptococcus thermophilus (strain CNRZ 1066).